The sequence spans 278 residues: Thiazole synthase (278 aa).

Lys-107 functions as the Schiff-base intermediate with DXP in the catalytic mechanism. 1-deoxy-D-xylulose 5-phosphate is bound by residues Gly-168, Ala-194 to Gly-195, and Ala-216 to Ser-217.

It belongs to the ThiG family. Homotetramer. Forms heterodimers with either ThiH or ThiS.

The protein resides in the cytoplasm. It catalyses the reaction [ThiS sulfur-carrier protein]-C-terminal-Gly-aminoethanethioate + 2-iminoacetate + 1-deoxy-D-xylulose 5-phosphate = [ThiS sulfur-carrier protein]-C-terminal Gly-Gly + 2-[(2R,5Z)-2-carboxy-4-methylthiazol-5(2H)-ylidene]ethyl phosphate + 2 H2O + H(+). Its pathway is cofactor biosynthesis; thiamine diphosphate biosynthesis. Catalyzes the rearrangement of 1-deoxy-D-xylulose 5-phosphate (DXP) to produce the thiazole phosphate moiety of thiamine. Sulfur is provided by the thiocarboxylate moiety of the carrier protein ThiS. In vitro, sulfur can be provided by H(2)S. This Corynebacterium urealyticum (strain ATCC 43042 / DSM 7109) protein is Thiazole synthase.